A 177-amino-acid polypeptide reads, in one-letter code: Dual-action ribosomal maturation protein DarP (177 aa).

Belongs to the DarP family.

The protein localises to the cytoplasm. Member of a network of 50S ribosomal subunit biogenesis factors which assembles along the 30S-50S interface, preventing incorrect 23S rRNA structures from forming. Promotes peptidyl transferase center (PTC) maturation. The sequence is that of Dual-action ribosomal maturation protein DarP from Glaesserella parasuis serovar 5 (strain SH0165) (Haemophilus parasuis).